The chain runs to 101 residues: Phosphoribosyl-AMP cyclohydrolase (101 aa).

A Mg(2+)-binding site is contributed by aspartate 71. Residue cysteine 72 participates in Zn(2+) binding. 2 residues coordinate Mg(2+): aspartate 73 and aspartate 75. 2 residues coordinate Zn(2+): cysteine 88 and cysteine 95.

It belongs to the PRA-CH family. In terms of assembly, homodimer. It depends on Mg(2+) as a cofactor. Zn(2+) serves as cofactor.

The protein localises to the cytoplasm. The catalysed reaction is 1-(5-phospho-beta-D-ribosyl)-5'-AMP + H2O = 1-(5-phospho-beta-D-ribosyl)-5-[(5-phospho-beta-D-ribosylamino)methylideneamino]imidazole-4-carboxamide. The protein operates within amino-acid biosynthesis; L-histidine biosynthesis; L-histidine from 5-phospho-alpha-D-ribose 1-diphosphate: step 3/9. Its function is as follows. Catalyzes the hydrolysis of the adenine ring of phosphoribosyl-AMP. The polypeptide is Phosphoribosyl-AMP cyclohydrolase (Bacillus cereus (strain AH820)).